Here is a 679-residue protein sequence, read N- to C-terminus: E3 ubiquitin ligase RNF157 (679 aa).

G2 is lipidated: N-myristoyl glycine. An RING-type zinc finger spans residues 277–316 (CVVCLSDVRDTLILPCRHLCLCNTCADTLRYQANNCPICR). The D-box 1 signature appears at 329–332 (RKKL). Polar residues-rich tracts occupy residues 339–349 (SFNPIISSQTS) and 478–537 (ESEN…SMSG). Disordered regions lie at residues 339–362 (SFNP…NIPP), 416–604 (LDRL…TQEG), and 650–679 (VSRN…PLAV). A compositionally biased stretch (acidic residues) spans 585-598 (QDAEGNDVIEEEDG). The D-box 2 motif lies at 656 to 659 (RRRL). Residues S660, S661, S662, and S663 each carry the phosphoserine modification.

In terms of assembly, interacts with APBB1. Interacts with CHD1; CHD1-binding controls RNF157 stability. Interacts with ATRN, MEGF8, TECR, MSI2, PLRG1, BYSL, MTERF3, PSMA1, MRPS18B, PRPF4, FASTKD2, SLC25A1, SMU1, CNOT9, MRPS2, MAGT1, FXR2, EMD, PSMD8, HDAC1, RAN, HSD17B12, TXNDC5 and MRPL19. Phosphorylation at Ser-660, Ser-661, Ser-662 and Ser-663 downstream of the PI3K and MAPK pathways influences the E3 ligase activity and stability of RNF157 during the cell cycle in an anaphase-promoting complex/cyclosome-CDH1-dependent manner.

It is found in the cytoplasm. The enzyme catalyses S-ubiquitinyl-[E2 ubiquitin-conjugating enzyme]-L-cysteine + [acceptor protein]-L-lysine = [E2 ubiquitin-conjugating enzyme]-L-cysteine + N(6)-ubiquitinyl-[acceptor protein]-L-lysine.. E3 ubiquitin ligase that ubiquitinates APBB1 for its degradation by the proteasome and thus prevents apoptosis and promotes survival of neurons. Has a dual role in neurons as it is also required for dendrite growth and maintenance for which its ligase activity is not critical. May act as a scaffold molecule to regulate this process. Acts as a downstream effector of the interconnected PI3K and MAPK signaling pathways and thus participates in the regulation of the cell cycle. In Homo sapiens (Human), this protein is E3 ubiquitin ligase RNF157 (RNF157).